Consider the following 150-residue polypeptide: MSDNHTLHIEEILDLLPHRYPFLLVDRVLDFEEGKFLRAVKNVSFNEPFFQGHFPGKPIFPGVLILEAMAQATGILAFRSVGKLEPNELYYFAAIDGARFKRPVVPGDQMILEVEFIKERRGVARCRGVAKVDGEIACEAEMMCARRREV.

H53 is a catalytic residue.

The protein belongs to the thioester dehydratase family. FabZ subfamily.

Its subcellular location is the cytoplasm. It catalyses the reaction a (3R)-hydroxyacyl-[ACP] = a (2E)-enoyl-[ACP] + H2O. Functionally, involved in unsaturated fatty acids biosynthesis. Catalyzes the dehydration of short chain beta-hydroxyacyl-ACPs and long chain saturated and unsaturated beta-hydroxyacyl-ACPs. This is 3-hydroxyacyl-[acyl-carrier-protein] dehydratase FabZ from Photorhabdus laumondii subsp. laumondii (strain DSM 15139 / CIP 105565 / TT01) (Photorhabdus luminescens subsp. laumondii).